We begin with the raw amino-acid sequence, 204 residues long: MAEDSDMRNELADMQQRADQLADESLESTRRMLQLVEESKDAGIRTLVMLDEQGEQLERIEEGMDQINKDMKDAEKNLNDLGKFCGLCSCPCNKMKSGASKAWGNNQDGVVASQPARVVDEREQMAISGGFIRRVTDDARENEMDENLEQVGGIIGNLRHMALDMGNEIDTQNRQIDRIMEKADSNKTRIDEANQRATKMLGSG.

Residues 1–11 (MAEDSDMRNEL) are compositionally biased toward basic and acidic residues. Positions 1 to 25 (MAEDSDMRNELADMQQRADQLADES) are disordered. T-SNARE coiled-coil homology domains follow at residues 19–81 (DQLA…LNDL) and 138–200 (DARE…ATKM).

Belongs to the SNAP-25 family. Expressed in several regions throughout the adult brain, including the mesencephalon.

It is found in the synapse. Its subcellular location is the synaptosome. The protein resides in the cell membrane. Functionally, may play an important role in the synaptic function of specific neuronal systems. Associates with proteins involved in vesicle docking and membrane fusion. In Danio rerio (Zebrafish), this protein is Synaptosomal-associated protein 25-A.